A 149-amino-acid polypeptide reads, in one-letter code: Transcriptional repressor NrdR (149 aa).

Residues C3–C34 fold into a zinc finger. The 91-residue stretch at P49–E139 folds into the ATP-cone domain.

This sequence belongs to the NrdR family. The cofactor is Zn(2+).

In terms of biological role, negatively regulates transcription of bacterial ribonucleotide reductase nrd genes and operons by binding to NrdR-boxes. In Aliivibrio fischeri (strain ATCC 700601 / ES114) (Vibrio fischeri), this protein is Transcriptional repressor NrdR.